We begin with the raw amino-acid sequence, 224 residues long: Non-structural protein V (224 aa).

Residues 54–65 (QKNIQHPTASHQ) are compositionally biased toward polar residues. 2 disordered regions span residues 54–94 (QKNI…TQIP) and 150–172 (TEFKRGAGSGCSRPDNPRGGHRR). The Zn(2+) site is built by H170, C189, C193, C205, C207, C210, C214, and C217.

The protein belongs to the paramyxoviruses V protein family. Interacts with host IFIH1/MDA5 and DHX58/LGP2. Forms with host DDB1, CUL4A, STAT1, STAT2 and STAT3 the mumps virus V-dependent complex (VDC).

The protein resides in the virion. Its subcellular location is the host cytoplasm. Its function is as follows. Plays an essential role in the inhibition of host immune response. Prevents the establishment of cellular antiviral state by blocking interferon-alpha/beta (IFN-alpha/beta) production and signaling pathway. Interacts with host IFIH1/MDA5 and DHX58/LGP2 to inhibit the transduction pathway involved in the activation of IFN-beta promoter, thus protecting the virus against cell antiviral state. Blocks the type I and II interferon signaling pathways by interacting with host STAT1, STAT2 and STAT3, and mediating their ubiquitination and subsequent proteasomal degradation. This is Non-structural protein V from Homo sapiens (Human).